The chain runs to 78 residues: uncharacterized protein (78 aa).

Positions Met-1 to Ala-45 are cleaved as a signal peptide.

It to E.coli YkfL.

This is an uncharacterized protein from Escherichia coli (strain K12).